The chain runs to 371 residues: Histidinol-phosphate aminotransferase (371 aa).

An N6-(pyridoxal phosphate)lysine modification is found at Lys-228.

The protein belongs to the class-II pyridoxal-phosphate-dependent aminotransferase family. Histidinol-phosphate aminotransferase subfamily. Requires pyridoxal 5'-phosphate as cofactor.

The enzyme catalyses L-histidinol phosphate + 2-oxoglutarate = 3-(imidazol-4-yl)-2-oxopropyl phosphate + L-glutamate. It participates in amino-acid biosynthesis; L-histidine biosynthesis; L-histidine from 5-phospho-alpha-D-ribose 1-diphosphate: step 7/9. The polypeptide is Histidinol-phosphate aminotransferase (Methanococcus maripaludis (strain C5 / ATCC BAA-1333)).